Here is a 596-residue protein sequence, read N- to C-terminus: Fumarate reductase (cytochrome) (596 aa).

A signal peptide spans 1–25; it reads MKKMNLAVCIATLMGTAGLMGTAVA. 17 residues coordinate heme c: H33, C39, C42, H43, C61, C64, H65, H83, H86, C93, C96, H97, A99, H100, C107, C110, and H111. The flavoprotein-like stretch occupies residues 143 to 596; sequence ALASAPHDTV…EEAAKYSKKN (454 aa). 8 residues coordinate FAD: A162, E181, N189, A194, G195, G196, G303, and D369. Fumarate is bound at residue G195. G195 contributes to the succinate binding site. Y386 contributes to the heme c binding site. Succinate contacts are provided by H390, T402, and E403. Fumarate contacts are provided by T402 and E403. Residue R427 is the Proton donor of the active site. Position 529 (H529) interacts with fumarate. Residue H529 coordinates succinate. FAD is bound by residues H530 and E559. Residues R569 and G572 each contribute to the fumarate site. Succinate contacts are provided by R569 and G572. FAD is bound by residues A574 and I575.

It in the C-terminal section; belongs to the FAD-dependent oxidoreductase 2 family. FRD/SDH subfamily. As to quaternary structure, monomer. Requires FAD as cofactor. Heme c is required as a cofactor.

Its subcellular location is the periplasm. The catalysed reaction is 2 Fe(III)-[cytochrome c] + succinate = fumarate + 2 Fe(II)-[cytochrome c] + 2 H(+). Its activity is regulated as follows. Mesaconic acid is a competitive inhibitor of fumarate reduction. Its function is as follows. Flavocytochrome that catalyzes the reduction of fumarate to succinate. Is essential for fumarate respiration during anaerobic growth, acting as the terminal reductase. Receives electrons from the membrane-bound tetraheme c-type cytochrome CymA. Is essentially unidirectional, catalyzing only fumarate reduction. Cannot reduce nitrite, dimethylsulphoxide, trimethylamine-N-oxide (TMAO) or sulfite. In vitro, can use the artificial electron donor methyl viologen. The polypeptide is Fumarate reductase (cytochrome) (Shewanella frigidimarina (strain NCIMB 400)).